Here is a 676-residue protein sequence, read N- to C-terminus: Ribosome quality control complex subunit TCF25 (676 aa).

2 disordered regions span residues Met1 to Asn59 and Leu85 to Leu147. Residues Gly123–Lys136 are compositionally biased toward basic residues. Ser602 is subject to Phosphoserine.

It belongs to the TCF25 family. In terms of assembly, component of the ribosome quality control complex (RQC), composed of the E3 ubiquitin ligase LTN1, TCF25 and NEMF associated with the 60S ribosomal subunit. Interacts (via C-terminus) with NFATC4; the interaction leads to suppresson of NFATC4 transcription factor activity and is reduced following stimulation with angiotensin-2. Interacts with XIAP. In the embryo, widely expressed with highest levels in brain. In the adult, highest expression is found in the heart. Repressed in cardiac tissue of patients with heart failure (at protein level). mRNA levels in the heart are unchanged in patients with heart failure.

It is found in the nucleus. Its subcellular location is the cytoplasm. The protein localises to the cytosol. Component of the ribosome quality control complex (RQC), a ribosome-associated complex that mediates ubiquitination and extraction of incompletely synthesized nascent chains for proteasomal degradation. In the RQC complex, required to promote formation of 'Lys-48'-linked polyubiquitin chains during ubiquitination of incompletely synthesized proteins by LTN1. May negatively regulate the calcineurin-NFAT signaling cascade by suppressing the activity of transcription factor NFATC4. May play a role in cell death control. The protein is Ribosome quality control complex subunit TCF25 of Homo sapiens (Human).